The chain runs to 385 residues: Tryptophan--tRNA ligase (385 aa).

Positions 82-90 match the 'HIGH' region motif; the sequence is PSGPMHIGH. Residues 253–257 carry the 'KMSKS' region motif; it reads KMSAS.

Belongs to the class-I aminoacyl-tRNA synthetase family.

It localises to the cytoplasm. It carries out the reaction tRNA(Trp) + L-tryptophan + ATP = L-tryptophyl-tRNA(Trp) + AMP + diphosphate + H(+). The sequence is that of Tryptophan--tRNA ligase from Pyrococcus abyssi (strain GE5 / Orsay).